A 137-amino-acid polypeptide reads, in one-letter code: Small ribosomal subunit protein uS12 (137 aa).

The interval 1–26 is disordered; it reads MPTINQLVTKGRKRKASKTKSPALNQ.

It belongs to the universal ribosomal protein uS12 family. Part of the 30S ribosomal subunit. Contacts proteins S8 and S17. May interact with IF1 in the 30S initiation complex.

Its function is as follows. With S4 and S5 plays an important role in translational accuracy. In terms of biological role, interacts with and stabilizes bases of the 16S rRNA that are involved in tRNA selection in the A site and with the mRNA backbone. Located at the interface of the 30S and 50S subunits, it traverses the body of the 30S subunit contacting proteins on the other side and probably holding the rRNA structure together. The combined cluster of proteins S8, S12 and S17 appears to hold together the shoulder and platform of the 30S subunit. In Mycoplasmopsis pulmonis (strain UAB CTIP) (Mycoplasma pulmonis), this protein is Small ribosomal subunit protein uS12.